The primary structure comprises 62 residues: Small EDRK-rich factor 1 (62 aa).

Composition is skewed to basic and acidic residues over residues 1 to 30 (MARG…KEDS) and 50 to 62 (IANE…TTEK). The interval 1 to 62 (MARGNQREIA…EKKSMQTTEK (62 aa)) is disordered.

It belongs to the SERF family. Interacts with SNCA; this interaction promotes the aggregation of SNCA. As to expression, expressed in brain (at protein level). Highly expressed in the testis.

The protein resides in the cytoplasm. It localises to the cytosol. Its subcellular location is the nucleus. Positive regulator of amyloid protein aggregation and proteotoxicity. Induces conformational changes in amyloid proteins, such as APP, HTT, and SNCA, driving them into compact formations preceding the formation of aggregates. This chain is Small EDRK-rich factor 1 (Serf1), found in Mus musculus (Mouse).